A 317-amino-acid polypeptide reads, in one-letter code: Putative 12-oxophytodienoate reductase 10 (317 aa).

Pro26–Gly28 is an FMN binding site. His117–Asn120 serves as a coordination point for substrate. Catalysis depends on Tyr122, which acts as the Proton donor. Arg169 lines the FMN pocket. Arg209 contributes to the substrate binding site. FMN-binding positions include Gly244 and Gly265–Arg266.

Belongs to the NADH:flavin oxidoreductase/NADH oxidase family. FMN is required as a cofactor.

Functionally, putative oxophytodienoate reductase that may be involved in the biosynthesis or metabolism of oxylipin signaling molecules. The polypeptide is Putative 12-oxophytodienoate reductase 10 (OPR10) (Oryza sativa subsp. japonica (Rice)).